We begin with the raw amino-acid sequence, 243 residues long: Ice-binding protein K3-B1 (243 aa).

The first 20 residues, 1–20 (MFSASSLLAVIALAISSVSA), serve as a signal peptide directing secretion.

It belongs to the ice-binding protein family.

Functionally, binds to the surface of ice crystals. Has low thermal hysteresis (TH) activity, which is the ability to lower the freezing point of an aqueous solution below its melting point. The TH activity of this protein is approximately 0.3 degrees Celsius at 11 mM. In Typhula ishikariensis (Gray snow mold fungus), this protein is Ice-binding protein K3-B1.